Consider the following 496-residue polypeptide: Apulose kinase (496 aa).

ATP contacts are provided by residues 13 to 15 (TTN), Thr267, Gly308, and 408 to 412 (GATQN).

This sequence belongs to the FGGY kinase family.

The enzyme catalyses apulose + ATP = apulose 4-phosphate + ADP + H(+). It participates in carbohydrate metabolism. Involved in catabolism of D-apiose. Catalyzes phosphorylation of apulose to form apulose 4-phosphate. The chain is Apulose kinase from Pectobacterium atrosepticum (strain SCRI 1043 / ATCC BAA-672) (Erwinia carotovora subsp. atroseptica).